Here is a 1420-residue protein sequence, read N- to C-terminus: ABC transporter G family member 32 (1420 aa).

The ABC transporter 1 domain maps to 135-408; sequence LRNIHVIGGK…FSSLGFTCPD (274 aa). Residue 168-175 participates in ATP binding; the sequence is GPPSSGKT. Residues 486 to 699 enclose the ABC transmembrane type-2 1 domain; the sequence is ELLKINFAWQ…AQNAASVNEF (214 aa). The next 7 helical transmembrane spans lie at 504 to 524, 544 to 564, 585 to 605, 623 to 643, 648 to 668, 674 to 694, and 735 to 755; these read FIYVFKFVQLLLVALITMTVF, LYFSMVIILFNGFTEVPMLVA, LPSWLLSIPTSIIESATWVAV, FLLYFSLHQMSLGLFRVMGSL, IVANTFGSFAMLVVMTLGGFI, IPSWWIWGYWISPLMYAQNAA, and IGVAALLGYTVLFNILFTLFL. An ABC transporter 2 domain is found at 818–1070; it reads LSFSNINYYV…ELIKYFESIE (253 aa). 863-870 provides a ligand contact to ATP; it reads GVSGAGKT. The ABC transmembrane type-2 2 domain occupies 1143-1357; the sequence is SQFVACLWKQ…TLYGLLVSQY (215 aa). 7 helical membrane-spanning segments follow: residues 1162–1182, 1202–1222, 1235–1255, 1277–1297, 1307–1327, 1334–1354, and 1392–1412; these read YTAVRFFYTVVISLMLGTICW, YAAVLFIGITNATAAQPVVSI, MYSALPFAFAQVFIEFPYVLA, FLWYLFFMYFSIMYFTFYGMM, VASIIAAPFYMLWNLFSGFMI, LWWRWYYWANPVAWTLYGLLV, and VSAIMVVAFCVFFSLVFAFAI.

The protein belongs to the ABC transporter superfamily. ABCG family. PDR (TC 3.A.1.205) subfamily. Ubiquitous in aerial organs. Higher expression levels in young, expanding tissues than in older tissues. Detected in the epidermal layer.

It is found in the cell membrane. Its function is as follows. May be a general defense protein. Required for the formation of the cuticle layer of the cell wall. The protein is ABC transporter G family member 32 of Arabidopsis thaliana (Mouse-ear cress).